A 155-amino-acid polypeptide reads, in one-letter code: Large ribosomal subunit protein uL15 (155 aa).

Positions 1 to 13 are enriched in basic and acidic residues; sequence MKLNELRDAEGAT. The disordered stretch occupies residues 1–41; it reads MKLNELRDAEGATKARKRVGRGIGSGSGKTGGRGVKGQKSR. A compositionally biased stretch (gly residues) spans 21-35; the sequence is RGIGSGSGKTGGRGV.

It belongs to the universal ribosomal protein uL15 family. Part of the 50S ribosomal subunit.

Functionally, binds to the 23S rRNA. This chain is Large ribosomal subunit protein uL15, found in Chelativorans sp. (strain BNC1).